Reading from the N-terminus, the 601-residue chain is Membrane protein insertase YidC (601 aa).

Residues 10–30 form a helical membrane-spanning segment; the sequence is ISISLVILVLFQVIASYVLPP. The interval 34-63 is disordered; sequence APPHPATQTAQTQPVSGQPAPGVPAPSAVP. Residues 39–53 show a composition bias toward low complexity; the sequence is ATQTAQTQPVSGQPA. Residues 54 to 63 are compositionally biased toward pro residues; it reads PGVPAPSAVP. The next 4 membrane-spanning stretches (helical) occupy residues 382–404, 455–475, 510–530, and 549–569; these read FGNMGVAIIVFTIGLKLVLFPLV, LPMLPQIPIFFSLYKVIFISI, ALSPFLHLGILPIIMGITMWG, and FMPVIFTFMLGRFAAGLVLYY.

This sequence belongs to the OXA1/ALB3/YidC family. Type 1 subfamily. As to quaternary structure, interacts with the Sec translocase complex via SecD. Specifically interacts with transmembrane segments of nascent integral membrane proteins during membrane integration.

It localises to the cell inner membrane. Required for the insertion and/or proper folding and/or complex formation of integral membrane proteins into the membrane. Involved in integration of membrane proteins that insert both dependently and independently of the Sec translocase complex, as well as at least some lipoproteins. Aids folding of multispanning membrane proteins. The polypeptide is Membrane protein insertase YidC (Acidiphilium cryptum (strain JF-5)).